The sequence spans 594 residues: Putative phospholipase B-like 2 (594 aa).

The first 46 residues, 1–46, serve as a signal peptide directing secretion; the sequence is MAAPVDGSSGGWAARALRRALALTSLTTLALLASLTGLLLSGPAGA. N-linked (GlcNAc...) asparagine glycosylation is found at asparagine 93 and asparagine 115. Cysteine 147 and cysteine 157 are disulfide-bonded. Residues asparagine 236 and asparagine 441 are each glycosylated (N-linked (GlcNAc...) asparagine). Residues cysteine 497 and cysteine 500 are joined by a disulfide bond. Asparagine 520 is a glycosylation site (N-linked (GlcNAc...) asparagine).

The protein belongs to the phospholipase B-like family. Interacts with IGF2R. Post-translationally, the p76 protein is synthesized as a 76 kDa precursor which is then processed into a N-terminal 28 kDa form and a C-terminal 40 kDa form. The C-terminal peptide is further processed into a 15 kDa form. Glycosylated; contains mannose 6-phosphate sugars. As to expression, present at highest levels in spleen, lung and brain (at protein level).

It localises to the lysosome lumen. Putative phospholipase. The sequence is that of Putative phospholipase B-like 2 (Plbd2) from Mus musculus (Mouse).